The following is a 112-amino-acid chain: ATP synthase epsilon chain (112 aa).

This sequence belongs to the ATPase epsilon chain family. As to quaternary structure, F-type ATPases have 2 components, CF(1) - the catalytic core - and CF(0) - the membrane proton channel. CF(1) has five subunits: alpha(3), beta(3), gamma(1), delta(1), epsilon(1). CF(0) has three main subunits: a, b and c.

Its subcellular location is the cell inner membrane. Produces ATP from ADP in the presence of a proton gradient across the membrane. The chain is ATP synthase epsilon chain (atpC) from Rickettsia conorii (strain ATCC VR-613 / Malish 7).